The following is a 150-amino-acid chain: Cytochrome c oxidase subunit 5A, mitochondrial (150 aa).

The N-terminal 41 residues, 1–41, are a transit peptide targeting the mitochondrion; sequence MLGTALRRCAVAAASRAGSRGLLHPTPVPGPTAAIQSIRCY. Residues 2–17 carry the SIFI-degron motif; sequence LGTALRRCAVAAASRA. N6-acetyllysine is present on residues Lys-87 and Lys-113. Residue Thr-141 is modified to Phosphothreonine.

It belongs to the cytochrome c oxidase subunit 5A family. Component of the cytochrome c oxidase (complex IV, CIV), a multisubunit enzyme composed of 14 subunits. The complex is composed of a catalytic core of 3 subunits MT-CO1, MT-CO2 and MT-CO3, encoded in the mitochondrial DNA, and 11 supernumerary subunits COX4I, COX5A, COX5B, COX6A, COX6B, COX6C, COX7A, COX7B, COX7C, COX8 and NDUFA4, which are encoded in the nuclear genome. The complex exists as a monomer or a dimer and forms supercomplexes (SCs) in the inner mitochondrial membrane with NADH-ubiquinone oxidoreductase (complex I, CI) and ubiquinol-cytochrome c oxidoreductase (cytochrome b-c1 complex, complex III, CIII), resulting in different assemblies (supercomplex SCI(1)III(2)IV(1) and megacomplex MCI(2)III(2)IV(2)). Interacts with AFG1L. Interacts with RAB5IF. In terms of processing, in response to mitochondrial stress, the precursor protein is ubiquitinated by the SIFI complex in the cytoplasm before mitochondrial import, leading to its degradation. Within the SIFI complex, UBR4 initiates ubiquitin chain that are further elongated or branched by KCMF1.

It is found in the mitochondrion inner membrane. The protein operates within energy metabolism; oxidative phosphorylation. Its function is as follows. Component of the cytochrome c oxidase, the last enzyme in the mitochondrial electron transport chain which drives oxidative phosphorylation. The respiratory chain contains 3 multisubunit complexes succinate dehydrogenase (complex II, CII), ubiquinol-cytochrome c oxidoreductase (cytochrome b-c1 complex, complex III, CIII) and cytochrome c oxidase (complex IV, CIV), that cooperate to transfer electrons derived from NADH and succinate to molecular oxygen, creating an electrochemical gradient over the inner membrane that drives transmembrane transport and the ATP synthase. Cytochrome c oxidase is the component of the respiratory chain that catalyzes the reduction of oxygen to water. Electrons originating from reduced cytochrome c in the intermembrane space (IMS) are transferred via the dinuclear copper A center (CU(A)) of subunit 2 and heme A of subunit 1 to the active site in subunit 1, a binuclear center (BNC) formed by heme A3 and copper B (CU(B)). The BNC reduces molecular oxygen to 2 water molecules using 4 electrons from cytochrome c in the IMS and 4 protons from the mitochondrial matrix. The sequence is that of Cytochrome c oxidase subunit 5A, mitochondrial (COX5A) from Otolemur crassicaudatus (Brown greater galago).